The sequence spans 575 residues: Urease subunit alpha (575 aa).

In terms of domain architecture, Urease spans 138-575 (GAVDCHVHLI…LPMTQRYFLF (438 aa)). Positions 143, 145, and 226 each coordinate Ni(2+). Residue lysine 226 is modified to N6-carboxylysine. Histidine 228 contacts substrate. Ni(2+) is bound by residues histidine 255 and histidine 281. The active-site Proton donor is histidine 329. Aspartate 369 is a Ni(2+) binding site.

The protein belongs to the metallo-dependent hydrolases superfamily. Urease alpha subunit family. Heterotrimer of UreA (gamma), UreB (beta) and UreC (alpha) subunits. Three heterotrimers associate to form the active enzyme. Ni cation serves as cofactor. Carboxylation allows a single lysine to coordinate two nickel ions.

The protein localises to the cytoplasm. The catalysed reaction is urea + 2 H2O + H(+) = hydrogencarbonate + 2 NH4(+). It participates in nitrogen metabolism; urea degradation; CO(2) and NH(3) from urea (urease route): step 1/1. The protein is Urease subunit alpha of Frankia casuarinae (strain DSM 45818 / CECT 9043 / HFP020203 / CcI3).